Here is a 132-residue protein sequence, read N- to C-terminus: Small ribosomal subunit protein uS8 (132 aa).

Belongs to the universal ribosomal protein uS8 family. In terms of assembly, part of the 30S ribosomal subunit. Contacts proteins S5 and S12.

In terms of biological role, one of the primary rRNA binding proteins, it binds directly to 16S rRNA central domain where it helps coordinate assembly of the platform of the 30S subunit. The sequence is that of Small ribosomal subunit protein uS8 from Pseudarthrobacter chlorophenolicus (strain ATCC 700700 / DSM 12829 / CIP 107037 / JCM 12360 / KCTC 9906 / NCIMB 13794 / A6) (Arthrobacter chlorophenolicus).